Reading from the N-terminus, the 54-residue chain is Pars intercerebralis major peptide D1 (54 aa).

This sequence belongs to the granulin family. Six disulfide bonds are present. As to expression, brain.

The protein resides in the secreted. The chain is Pars intercerebralis major peptide D1 from Locusta migratoria (Migratory locust).